The primary structure comprises 303 residues: D-alanine--D-alanine ligase B (303 aa).

In terms of domain architecture, ATP-grasp spans 103 to 298 (KLLWKGAGLP…YEDLCLKVLD (196 aa)). 129 to 184 (ERQLGLPIFVKPSTEGSSIGVTKVKQPGELRAAFEEARKYDKVVIAEQFIGGGEYT) provides a ligand contact to ATP. Mg(2+)-binding residues include aspartate 252, glutamate 265, and asparagine 267.

The protein belongs to the D-alanine--D-alanine ligase family. Requires Mg(2+) as cofactor. Mn(2+) serves as cofactor.

The protein resides in the cytoplasm. The catalysed reaction is 2 D-alanine + ATP = D-alanyl-D-alanine + ADP + phosphate + H(+). Its pathway is cell wall biogenesis; peptidoglycan biosynthesis. In terms of biological role, cell wall formation. The chain is D-alanine--D-alanine ligase B from Chromobacterium violaceum (strain ATCC 12472 / DSM 30191 / JCM 1249 / CCUG 213 / NBRC 12614 / NCIMB 9131 / NCTC 9757 / MK).